A 506-amino-acid chain; its full sequence is UPF0522 protein A (506 aa).

Positions methionine 1–serine 18 are cleaved as a signal peptide. Asparagine 145, asparagine 155, asparagine 330, asparagine 366, asparagine 418, and asparagine 427 each carry an N-linked (GlcNAc...) asparagine glycan.

It belongs to the UPF0522 family.

The protein localises to the secreted. The protein is UPF0522 protein A of Dictyostelium discoideum (Social amoeba).